Consider the following 110-residue polypeptide: MSLSEARFHDLVDETQEKLEDIFDDSDLDIDMENSAGVLTVKFENGTQLIFSRQEPLRQLWLAAVSGGFHFDYDEESERWMCDKSEEQLGEMLERIVKQQAGTEFDFEGL.

This sequence belongs to the frataxin family.

Its function is as follows. Involved in iron-sulfur (Fe-S) cluster assembly. May act as a regulator of Fe-S biogenesis. The polypeptide is Iron-sulfur cluster assembly protein CyaY (Pseudomonas fluorescens (strain Pf0-1)).